Reading from the N-terminus, the 100-residue chain is MIAPGDIAPRRDSEHELYVAVLSNALHRAADTGRVITCPFIPGRVPEDLLAMVVAVEQPNGTLLPELVQWLHVAALGAPLGNAGVAALREAASVVTALLC.

Functionally, toxic component of a type II toxin-antitoxin (TA) system. Upon expression in M.smegmatis inhibits colony formation. Its toxic effect is neutralized by coexpression with cognate antitoxin Rv0298/MT0312. This Mycobacterium tuberculosis (strain ATCC 25618 / H37Rv) protein is Toxin Rv0299.